The following is a 426-amino-acid chain: Gamma-glutamyl phosphate reductase (426 aa).

The protein belongs to the gamma-glutamyl phosphate reductase family.

The protein localises to the cytoplasm. The catalysed reaction is L-glutamate 5-semialdehyde + phosphate + NADP(+) = L-glutamyl 5-phosphate + NADPH + H(+). It participates in amino-acid biosynthesis; L-proline biosynthesis; L-glutamate 5-semialdehyde from L-glutamate: step 2/2. Catalyzes the NADPH-dependent reduction of L-glutamate 5-phosphate into L-glutamate 5-semialdehyde and phosphate. The product spontaneously undergoes cyclization to form 1-pyrroline-5-carboxylate. This Sorangium cellulosum (strain So ce56) (Polyangium cellulosum (strain So ce56)) protein is Gamma-glutamyl phosphate reductase.